Consider the following 288-residue polypeptide: Aquaporin NIP2-1 (288 aa).

The residue at position 1 (M1) is an N-acetylmethionine. A run of 2 helical transmembrane segments spans residues L50–V70 and V77–C97. An NPA 1 motif is present at residues N106–A108. 3 consecutive transmembrane segments (helical) span residues A126–F146, L170–V190, and G202–A222. Residues N225 to A227 carry the NPA 2 motif. A helical membrane pass occupies residues L234–V254. S278 bears the Phosphoserine mark.

This sequence belongs to the MIP/aquaporin (TC 1.A.8) family. NIP (TC 1.A.8.12) subfamily. As to expression, specifically expressed in roots with high expression in root elongation zone and root stele.

The protein localises to the endoplasmic reticulum membrane. Functionally, low water transport activity in yeast cells. This is Aquaporin NIP2-1 (NIP2-1) from Arabidopsis thaliana (Mouse-ear cress).